The primary structure comprises 228 residues: Expansin-B13 (228 aa).

The first 22 residues, 1–22, serve as a signal peptide directing secretion; sequence MASSSLLLASVVVAAMVSAVSC. An N-linked (GlcNAc...) asparagine glycan is attached at N32. The Expansin-like EG45 domain maps to 61–172; sequence SGACGYKDVD…KEKGSEEWKA (112 aa). 2 cysteine pairs are disulfide-bonded: C64–C92 and C100–C106. An Expansin-like CBD domain is found at 142-223; sequence GKDEELLKYV…GWKADSVYKS (82 aa).

It belongs to the expansin family. Expansin B subfamily.

The protein resides in the secreted. Its subcellular location is the cell wall. It is found in the membrane. Its function is as follows. May cause loosening and extension of plant cell walls by disrupting non-covalent bonding between cellulose microfibrils and matrix glucans. No enzymatic activity has been found. May be required for rapid internodal elongation in deepwater rice during submergence. This is Expansin-B13 (EXPB13) from Oryza sativa subsp. japonica (Rice).